The chain runs to 1062 residues: MPQPAIIAKLEQQLRITIAPFDAPDLKAFMRYGRKGDDNSQYFLKDGKLTGLKLRTLGLKDTSFLEERELAGLQGLYLAENDFSSLQLPGHLQQLRLLHLADNKELKTLEFAGSMPLLEEIDLSDSGIQTLQLPACPALQKLDVSRSKLEAFSFASACPALWWLDLSGNGELRKLKMPAGFKALQYLYLYKSGIQELQINGKLPKLVVLDLEGNQLKQWPEKLLLPEGLETLYLEGNPIENIPETIRGSGERHNSVEDVRQYLLSIIDEDKVEYLHQAKMILVGNGEVGKTSIRLKLLDSKATLPKKKDRTQGLDIVPYELKALSPDLTGLEDAIDFQLNIWDFGGQGKYREVQQLFFSPQSLYLFVTACDDTPEDKESYVTFDYWMSLVHALSYDREQERSSPVIHVVNKIDKERMDIDQTAHNRFGNVEEFHAISCKHLTNFEALRKAIPRVLPKVGQGIFRDQYNEDWLGVMEELQRRQGEHHITYQEYRDEVCKDRLNDGEARAWLRILDRIGTVIYFGENEKLKDWIILNPNWVKQAVFEVIDSGERNPVPQWRFEKQIWSHYSEKEREKLFELLQAYDLAYKQQNAFGEQEFVVPALLEHESPNYQDLLPQEELPLKLRFAFKPILPAGTVNKLMVRLKDYIYRGLMWKDNVVFHHPDSNAYVQVEEDWQEHFIYLSVYGKQPSVIYETVTSTLKDINNDFKNAKFLKELEFTVEGFDGEEWMKKRLLKKAGADFFNFLWEKPGIHYKEEDEKNIMDQVKELIAKNRVGDALEMLKSLVPAHLEAEVLQLISRYSKLQRDSRMGILANNDENVERNRIVSSILNLASEAERDNDHTGLSDSSDQEDETFTNVTDQTKKILFICSSPSGKNLLDFGKEFKSIGIARQLADSRDDYAEPIIKTSVEADDLLHIMTKYQPDILHISLHSSKSKGLYFENNAGQAEPISAEDFKDIIETYASDPDGKGRIETIVLSCCDSEAYGRAITNFADHIVVTKDLFPDKAAVVYAKDFYRMLFNNKDIGFAHRSATSAIKRKKYPSDGFAHPIHEIPFLIKNDDK.

8 LRR repeats span residues 70 to 94, 95 to 116, 115 to 141, 142 to 159, 160 to 180, 181 to 203, 204 to 226, and 228 to 249; these read LAGL…HLQQ, LRLL…GSMP, MPLL…ALQK, LDVS…SACP, ALWW…MPAG, FKAL…NGKL, PKLV…LLLP, and GLET…IRGS. The COR domain maps to 470-660; the sequence is DWLGVMEELQ…GLMWKDNVVF (191 aa). A disordered region spans residues 836–856; the sequence is ERDNDHTGLSDSSDQEDETFT. Catalysis depends on residues H931 and C980.

A dedicated protease for substrate gasdermin bGSDM; cleaves the bGSDM precursor, releasing the pore-forming moiety, which integrates into the membrane and triggers cell death. Probably involved in defense against bacteriophages. Expression of bGSDM and this neighboring protease is highly toxic in E.coli. The protein is Roc-COR-CHAT protease of Unknown prokaryotic organism.